The chain runs to 147 residues: Myosin-2 essential light chain (147 aa).

EF-hand domains lie at 7 to 42 (DQLAEFQEAFNLFDNRGDGKIQLSQVGECLRALGQN), 80 to 115 (DTADDFIEGLRHFDKDASGYISSAELRHLLTTLGEK), and 115 to 147 (KLTDEEVEQLLANMEDQQGNINYEEFVRMVMSG). A Phosphoserine modification is found at Ser-30. Asp-93, Asp-95, Ser-97, Tyr-99, and Glu-104 together coordinate Ca(2+).

In terms of assembly, myosin is a hexamer of 2 heavy chains and 4 light chains.

The chain is Myosin-2 essential light chain (Mlc-c) from Drosophila melanogaster (Fruit fly).